A 706-amino-acid polypeptide reads, in one-letter code: Elongation factor G 1 (706 aa).

Residues 8-290 (NRYRNIGICA…AVIDYLPAPT (283 aa)) form the tr-type G domain. Residues 17 to 24 (AHVDAGKT), 88 to 92 (DTPGH), and 142 to 145 (NKMD) contribute to the GTP site.

It belongs to the TRAFAC class translation factor GTPase superfamily. Classic translation factor GTPase family. EF-G/EF-2 subfamily.

The protein localises to the cytoplasm. Functionally, catalyzes the GTP-dependent ribosomal translocation step during translation elongation. During this step, the ribosome changes from the pre-translocational (PRE) to the post-translocational (POST) state as the newly formed A-site-bound peptidyl-tRNA and P-site-bound deacylated tRNA move to the P and E sites, respectively. Catalyzes the coordinated movement of the two tRNA molecules, the mRNA and conformational changes in the ribosome. This is Elongation factor G 1 from Pseudomonas aeruginosa (strain ATCC 15692 / DSM 22644 / CIP 104116 / JCM 14847 / LMG 12228 / 1C / PRS 101 / PAO1).